Consider the following 108-residue polypeptide: Thioredoxin (108 aa).

The 107-residue stretch at Asn-2–Lys-108 folds into the Thioredoxin domain. A disulfide bond links Cys-32 and Cys-35.

Belongs to the thioredoxin family.

Its function is as follows. Participates in various redox reactions through the reversible oxidation of its active center dithiol to a disulfide and catalyzes dithiol-disulfide exchange reactions. The polypeptide is Thioredoxin (trxA) (Buchnera aphidicola subsp. Schizaphis graminum (strain Sg)).